Here is a 72-residue protein sequence, read N- to C-terminus: Large ribosomal subunit protein uL29 (72 aa).

This sequence belongs to the universal ribosomal protein uL29 family.

The sequence is that of Large ribosomal subunit protein uL29 from Prochlorococcus marinus (strain AS9601).